The chain runs to 541 residues: Arginine--tRNA ligase (541 aa).

Residues 119-129 (ANPTGPLHIGH) carry the 'HIGH' region motif.

It belongs to the class-I aminoacyl-tRNA synthetase family. In terms of assembly, monomer.

The protein resides in the cytoplasm. The catalysed reaction is tRNA(Arg) + L-arginine + ATP = L-arginyl-tRNA(Arg) + AMP + diphosphate. In Helicobacter pylori (strain ATCC 700392 / 26695) (Campylobacter pylori), this protein is Arginine--tRNA ligase (argS).